A 162-amino-acid chain; its full sequence is Probable E3 ubiquitin-protein ligase XERICO (162 aa).

The helical transmembrane segment at 12 to 28 (GMLCVILVNTALSISIV) threads the bilayer. An RING-type; atypical zinc finger spans residues 103 to 145 (CSVCLSKFQGDSEINKLKCGHLFHKTCLEKWIDYWNITCPLCR).

In terms of assembly, interacts with UBC8 and TULP9. Ubiquitous. Higher expression in actively growing tissues.

The protein resides in the membrane. It catalyses the reaction S-ubiquitinyl-[E2 ubiquitin-conjugating enzyme]-L-cysteine + [acceptor protein]-L-lysine = [E2 ubiquitin-conjugating enzyme]-L-cysteine + N(6)-ubiquitinyl-[acceptor protein]-L-lysine.. The protein operates within protein modification; protein ubiquitination. Function on abscisic acid homeostasis at post-translational level, probably through ubiquitin/proteasome-dependent substrate-specific degradation. The protein is Probable E3 ubiquitin-protein ligase XERICO (XERICO) of Arabidopsis thaliana (Mouse-ear cress).